A 460-amino-acid chain; its full sequence is ATP synthase subunit beta 1 (460 aa).

ATP is bound at residue 149-156; sequence GGAGVGKT.

Belongs to the ATPase alpha/beta chains family. As to quaternary structure, F-type ATPases have 2 components, CF(1) - the catalytic core - and CF(0) - the membrane proton channel. CF(1) has five subunits: alpha(3), beta(3), gamma(1), delta(1), epsilon(1). CF(0) has three main subunits: a(1), b(2) and c(9-12). The alpha and beta chains form an alternating ring which encloses part of the gamma chain. CF(1) is attached to CF(0) by a central stalk formed by the gamma and epsilon chains, while a peripheral stalk is formed by the delta and b chains.

The protein localises to the cell inner membrane. The catalysed reaction is ATP + H2O + 4 H(+)(in) = ADP + phosphate + 5 H(+)(out). Produces ATP from ADP in the presence of a proton gradient across the membrane. The catalytic sites are hosted primarily by the beta subunits. The chain is ATP synthase subunit beta 1 from Nitrosomonas eutropha (strain DSM 101675 / C91 / Nm57).